The chain runs to 513 residues: Probable histone deacetylase 19 (513 aa).

The interval 23–334 (RRVCYFYDPD…WCYETGVALG (312 aa)) is histone deacetylase. Residue histidine 154 is the Proton donor/acceptor of the active site. Residues aspartate 189, histidine 191, and aspartate 277 each contribute to the Zn(2+) site. 2 disordered regions span residues 384-432 (HAPS…ESSR) and 446-513 (ENAT…YHKP). The segment covering 398-409 (EIPEQDEDQDDP) has biased composition (acidic residues). Over residues 410–432 (DERHDPDSDMEVDDHKAVEESSR) the composition is skewed to basic and acidic residues. The segment covering 492–504 (NVKNEPESSTKLQ) has biased composition (polar residues).

Belongs to the histone deacetylase family. HD type 1 subfamily. The cofactor is Zn(2+).

The protein localises to the nucleus. The catalysed reaction is N(6)-acetyl-L-lysyl-[histone] + H2O = L-lysyl-[histone] + acetate. Its function is as follows. Responsible for the deacetylation of lysine residues on the N-terminal part of the core histones (H2A, H2B, H3 and H4). Histone deacetylation gives a tag for epigenetic repression and plays an important role in transcriptional regulation, cell cycle progression and developmental events. Histone deacetylases act via the formation of large multiprotein complexes. This chain is Probable histone deacetylase 19, found in Zea mays (Maize).